A 250-amino-acid polypeptide reads, in one-letter code: Ribonuclease HII (250 aa).

In terms of domain architecture, RNase H type-2 spans 66 to 250; that stretch reads ELVAGVDEVG…TFAPVSDFFK (185 aa). Residues aspartate 72, glutamate 73, and aspartate 164 each coordinate a divalent metal cation.

This sequence belongs to the RNase HII family. Requires Mn(2+) as cofactor. Mg(2+) is required as a cofactor.

Its subcellular location is the cytoplasm. The catalysed reaction is Endonucleolytic cleavage to 5'-phosphomonoester.. Endonuclease that specifically degrades the RNA of RNA-DNA hybrids. This chain is Ribonuclease HII, found in Lactobacillus helveticus (strain DPC 4571).